A 283-amino-acid chain; its full sequence is Bifunctional protein FolD (283 aa).

NADP(+) contacts are provided by residues 164–166, S189, and I230; that span reads GRS.

It belongs to the tetrahydrofolate dehydrogenase/cyclohydrolase family. As to quaternary structure, homodimer.

The catalysed reaction is (6R)-5,10-methylene-5,6,7,8-tetrahydrofolate + NADP(+) = (6R)-5,10-methenyltetrahydrofolate + NADPH. It catalyses the reaction (6R)-5,10-methenyltetrahydrofolate + H2O = (6R)-10-formyltetrahydrofolate + H(+). It functions in the pathway one-carbon metabolism; tetrahydrofolate interconversion. In terms of biological role, catalyzes the oxidation of 5,10-methylenetetrahydrofolate to 5,10-methenyltetrahydrofolate and then the hydrolysis of 5,10-methenyltetrahydrofolate to 10-formyltetrahydrofolate. The sequence is that of Bifunctional protein FolD from Pelobacter propionicus (strain DSM 2379 / NBRC 103807 / OttBd1).